The sequence spans 766 residues: MNIRYLLLLSLMPHLVWAAEEPTPEIPFSQCLIEPPVSRSFDDRAQLTDIDPNDIVIISDRTDASFNKQAHFDGDVSFSQGQRHIAADKATLDQRQQQLSATGNLIFKDENITVTADTLEAQMSSNSATLDNTQYWLHGQQVHGKASKMQITSENNLLLSNANFTTCPPGDESWLLEAELIKIDSKEEWGEIWNAKLRIADVPVLYIPYMTVPVSDKRKTGFLFPNFSTSTTNGVQVSTPYYWNIAPEYDLTFTPDMMSSRGLFTKTQVNYLAGEAQQGQVNFEYLDNDNKLAGSPNRYLYNMSHQGAINDNWRVQANFTDVSDNNYFNDLNSDVNRSTDNQLSRIGETSYFERNWDMSVRVQDIKVLGESEKPYQVMPQLNFNYRVADIWQAIDFNFNSELTNFEHQDDNRNTATRIHLVPSLVWPIQGPAGSFTSELKLLQTQFFQQTQDSNNPYNQDVSRTIPQLRLHGKVNFERPANIWGEAYRQTIEPQVQYLYVGYEDQSNIGFYDTAQLQDDYFGLFRDRRFSGHDRIADANQATVGLTSRLLDASNREQFKFSIGQTLYIEDSKVLLNQGLRDAQQSASVLAAELDARLYQDWFISGAVQHDTEHGKNKKSEVTLDYRPSNDKLLQFSYRFVPDLLNTNTNGRVNISQMGVRTSWPLTDSLYFVGNWYHDLKEERDVETYTGIQYESCCWAVRLSYHYRIKTNYDDELMASIDNREEFEKGVYLNFVIKGLGGSGPLGVSDMLDEGLFNYRKPLYLRN.

An N-terminal signal peptide occupies residues 1 to 18; sequence MNIRYLLLLSLMPHLVWA.

It belongs to the LptD family. Component of the lipopolysaccharide transport and assembly complex. Interacts with LptE and LptA.

It localises to the cell outer membrane. Its function is as follows. Together with LptE, is involved in the assembly of lipopolysaccharide (LPS) at the surface of the outer membrane. The chain is LPS-assembly protein LptD from Shewanella denitrificans (strain OS217 / ATCC BAA-1090 / DSM 15013).